Reading from the N-terminus, the 256-residue chain is Kallikrein 1-related peptidase-like b4 (256 aa).

Positions 1–17 (MWFLILFLALSLGGIDA) are cleaved as a signal peptide. The interval 18–24 (APPVQSQ) is activation peptide homolog. In terms of domain architecture, Peptidase S1 spans 18-253 (APPVQSQVDC…FSSWIRETMA (236 aa)). Cysteines 45 and 61 form a disulfide. Residues glutamate 77 and histidine 84 each contribute to the Zn(2+) site. 3 cysteine pairs are disulfide-bonded: cysteine 147/cysteine 214, cysteine 179/cysteine 193, and cysteine 204/cysteine 229.

The protein belongs to the peptidase S1 family. Kallikrein subfamily. As to quaternary structure, 7S nerve growth factor is composed of two alpha chains, a beta dimer composed of identical chains, and two gamma chains. The cofactor is Zn(2+). Post-translationally, the presence of Gln-24 prevents cleavage of the activation peptide, which remains attached at the amino end of the mature alpha chain.

The polypeptide is Kallikrein 1-related peptidase-like b4 (Klk1b4) (Mus musculus (Mouse)).